Consider the following 224-residue polypeptide: Ribose-5-phosphate isomerase A (224 aa).

Residues 26-29, 81-84, and 94-97 each bind substrate; these read TGST, DGAD, and KGGG. Catalysis depends on Glu103, which acts as the Proton acceptor. Lys121 contributes to the substrate binding site.

Belongs to the ribose 5-phosphate isomerase family. In terms of assembly, homodimer.

The enzyme catalyses aldehydo-D-ribose 5-phosphate = D-ribulose 5-phosphate. It participates in carbohydrate degradation; pentose phosphate pathway; D-ribose 5-phosphate from D-ribulose 5-phosphate (non-oxidative stage): step 1/1. Its function is as follows. Catalyzes the reversible conversion of ribose-5-phosphate to ribulose 5-phosphate. In Listeria monocytogenes serovar 1/2a (strain ATCC BAA-679 / EGD-e), this protein is Ribose-5-phosphate isomerase A.